Reading from the N-terminus, the 267-residue chain is 4-hydroxy-tetrahydrodipicolinate reductase (267 aa).

Residues 8 to 13 (GIAGRM), glutamate 34, 98 to 100 (GST), and 122 to 125 (SPNM) each bind NAD(+). Histidine 155 functions as the Proton donor/acceptor in the catalytic mechanism. Histidine 156 is a binding site for (S)-2,3,4,5-tetrahydrodipicolinate. Catalysis depends on lysine 159, which acts as the Proton donor. Position 165–166 (165–166 (GT)) interacts with (S)-2,3,4,5-tetrahydrodipicolinate.

This sequence belongs to the DapB family.

The protein resides in the cytoplasm. The enzyme catalyses (S)-2,3,4,5-tetrahydrodipicolinate + NAD(+) + H2O = (2S,4S)-4-hydroxy-2,3,4,5-tetrahydrodipicolinate + NADH + H(+). It catalyses the reaction (S)-2,3,4,5-tetrahydrodipicolinate + NADP(+) + H2O = (2S,4S)-4-hydroxy-2,3,4,5-tetrahydrodipicolinate + NADPH + H(+). Its pathway is amino-acid biosynthesis; L-lysine biosynthesis via DAP pathway; (S)-tetrahydrodipicolinate from L-aspartate: step 4/4. Catalyzes the conversion of 4-hydroxy-tetrahydrodipicolinate (HTPA) to tetrahydrodipicolinate. This Syntrophobacter fumaroxidans (strain DSM 10017 / MPOB) protein is 4-hydroxy-tetrahydrodipicolinate reductase.